Here is a 191-residue protein sequence, read N- to C-terminus: MLSFLSSNLSNVRQSLAQVLNFALVLSTAFMMWKGLSVFTASSSPVVVVLSGSMEPAFQRGDLLFLWNRSPRAEVGEIVVYNVRGKDIPIVHRVVRTFPEIEGKTKKVKEISESSPIPNNMLLTKGDNNVADDVELYARGQDYLNREEDIVGSVRGYIPMVGYVTILLSEYPWLKTALLGIMGLMVMLQRE.

Over 1 to 18 (MLSFLSSNLSNVRQSLAQ) the chain is Cytoplasmic. Residues 19–39 (VLNFALVLSTAFMMWKGLSVF) form a helical; Signal-anchor for type II membrane protein membrane-spanning segment. Over 40–191 (TASSSPVVVV…MGLMVMLQRE (152 aa)) the chain is Lumenal. Residues serine 53, histidine 92, and aspartate 133 each act as charge relay system in the active site. The tract at residues 177–188 (ALLGIMGLMVML) is C-terminal short (CTS) helix.

The protein belongs to the peptidase S26B family. In terms of assembly, component of the signal peptidase complex (SPC) composed of a catalytic subunit SEC11 and three accessory subunits SPC1, SPC2 and SPC3. The complex induces a local thinning of the ER membrane which is used to measure the length of the signal peptide (SP) h-region of protein substrates. This ensures the selectivity of the complex towards h-regions shorter than 18-20 amino acids. SPC associates with the translocon complex.

The protein resides in the endoplasmic reticulum membrane. It catalyses the reaction Cleavage of hydrophobic, N-terminal signal or leader sequences from secreted and periplasmic proteins.. Its function is as follows. Catalytic component of the signal peptidase complex (SPC) which catalyzes the cleavage of N-terminal signal sequences from nascent proteins as they are translocated into the lumen of the endoplasmic reticulum. Specifically cleaves N-terminal signal peptides that contain a hydrophobic alpha-helix (h-region) shorter than 18-20 amino acids. This Aspergillus oryzae (strain ATCC 42149 / RIB 40) (Yellow koji mold) protein is Signal peptidase complex catalytic subunit sec11 (sec11).